A 98-amino-acid polypeptide reads, in one-letter code: NADH-ubiquinone oxidoreductase chain 4L (98 aa).

The next 3 membrane-spanning stretches (helical) occupy residues 1–21 (MTLI…GFLM), 29–49 (ALLC…LTVL), and 59–79 (MPII…ALLV).

The protein belongs to the complex I subunit 4L family. As to quaternary structure, core subunit of respiratory chain NADH dehydrogenase (Complex I) which is composed of 45 different subunits.

Its subcellular location is the mitochondrion inner membrane. The catalysed reaction is a ubiquinone + NADH + 5 H(+)(in) = a ubiquinol + NAD(+) + 4 H(+)(out). Functionally, core subunit of the mitochondrial membrane respiratory chain NADH dehydrogenase (Complex I) which catalyzes electron transfer from NADH through the respiratory chain, using ubiquinone as an electron acceptor. Part of the enzyme membrane arm which is embedded in the lipid bilayer and involved in proton translocation. The chain is NADH-ubiquinone oxidoreductase chain 4L (MT-ND4L) from Inia geoffrensis (Amazon river dolphin).